A 408-amino-acid chain; its full sequence is Imidazolonepropionase (408 aa).

The Fe(3+) site is built by His-73 and His-75. Residues His-73 and His-75 each coordinate Zn(2+). The 4-imidazolone-5-propanoate site is built by Arg-82, Tyr-145, and His-178. An N-formimidoyl-L-glutamate-binding site is contributed by Tyr-145. His-243 lines the Fe(3+) pocket. His-243 contacts Zn(2+). Residue Gln-246 coordinates 4-imidazolone-5-propanoate. Asp-318 contributes to the Fe(3+) binding site. Residue Asp-318 participates in Zn(2+) binding. 2 residues coordinate N-formimidoyl-L-glutamate: Asn-320 and Gly-322. Residue Ser-323 coordinates 4-imidazolone-5-propanoate.

Belongs to the metallo-dependent hydrolases superfamily. HutI family. The cofactor is Zn(2+). It depends on Fe(3+) as a cofactor.

It localises to the cytoplasm. It catalyses the reaction 4-imidazolone-5-propanoate + H2O = N-formimidoyl-L-glutamate. Its pathway is amino-acid degradation; L-histidine degradation into L-glutamate; N-formimidoyl-L-glutamate from L-histidine: step 3/3. Catalyzes the hydrolytic cleavage of the carbon-nitrogen bond in imidazolone-5-propanoate to yield N-formimidoyl-L-glutamate. It is the third step in the universal histidine degradation pathway. The chain is Imidazolonepropionase from Shewanella sediminis (strain HAW-EB3).